Reading from the N-terminus, the 258-residue chain is MARILITGSTDGFGLEAARQLVDRKHVVYLHARSQERAEEVKTKCPGAAGVLVADLTSVAETRKLAEEANAIGTFDAIILNAGLLYGPFRKTDYGVPAMPFVNVLAPYILSCLLEQPKRLIFIASILHKEAKTDLKDIFWLERGEKEFQDFPAYCDSKFHVMLLANAVAKRFKGTSVTSVHPGYVATKLGGSGATDKMEDGVETYVMLAEGDYDQSLTGVYFVPKKQIGEPLPETTQEDLQETVVKACEDITGIKLPA.

R37, D55, N81, Y154, K158, V185, and T187 together coordinate NADP(+). The active-site Proton donor is Y154. The Lowers pKa of active site Tyr role is filled by K158.

It belongs to the short-chain dehydrogenases/reductases (SDR) family.

Short-chain dehydrogenase; part of the gene cluster that mediates the biosynthesis of the yellow pigment chrysogine. the NRPS chyA mediates the condensation of anthranilic acid and alanine into the intermediate 2-(2-aminopropanamido)benzoic acid. The remainder of the pathway is highly branched yielding at least 13 chrysogine-related compounds. The malonyl transferase chyE converts 2-(2-aminopropanamido)benzoic acid and 2-(2-aminopropanamido)benzamidine into 2-(2-(2-carboxyacetamido)propanamido)benzoic acid and 3-((1-((2-carbamoylphenyl)amino)-1-oxopropan-2-yl)amino)-3-oxopropanoic acid, respectively. ChyD is an amidase, being responsible for the amidation of the carboxylic acid moiety of 2-(2-aminopropanamido)benzoic acid, 2-(2-(2-carboxyacetamido)propanamido)benzoic acid and 2-(2-((4-amino-1-carboxy-4-oxobutyl)amino)propanamido)benzoic acid. ChyC is involved in the same reactions as ChyD, but plays a more minor role in the amidation reactions compared to chyD. The oxidoreductases chyH and chyM are involved in oxidation reactions that form N-pyruvoylanthranilamide from 2-(2-aminopropanamido)benzamidine and (1-((2-carbamoylphenyl)amino)-1-oxopropan-2-yl)glutamine, respectively. N-pyruvoylanthranilamide is further converted via two further branches in the pathway, yielding chrysogine and additional chrysogine-related coumpounds. Chrysogine is likely formed by a spontaneous ring closure from N-pyruvoylanthranilamide. The polypeptide is Short-chain dehydrogenase chyC (Penicillium rubens (strain ATCC 28089 / DSM 1075 / NRRL 1951 / Wisconsin 54-1255) (Penicillium chrysogenum)).